Here is a 423-residue protein sequence, read N- to C-terminus: Glucose-1-phosphate adenylyltransferase (423 aa).

Residues tyrosine 110, glycine 175, glutamate 190–lysine 191, and serine 208 each bind alpha-D-glucose 1-phosphate.

The protein belongs to the bacterial/plant glucose-1-phosphate adenylyltransferase family. Homotetramer.

It catalyses the reaction alpha-D-glucose 1-phosphate + ATP + H(+) = ADP-alpha-D-glucose + diphosphate. The protein operates within glycan biosynthesis; glycogen biosynthesis. Its function is as follows. Involved in the biosynthesis of ADP-glucose, a building block required for the elongation reactions to produce glycogen. Catalyzes the reaction between ATP and alpha-D-glucose 1-phosphate (G1P) to produce pyrophosphate and ADP-Glc. The chain is Glucose-1-phosphate adenylyltransferase from Nitrosococcus oceani (strain ATCC 19707 / BCRC 17464 / JCM 30415 / NCIMB 11848 / C-107).